The chain runs to 309 residues: Tagatose-6-phosphate kinase (309 aa).

This sequence belongs to the carbohydrate kinase PfkB family. LacC subfamily.

The enzyme catalyses D-tagatofuranose 6-phosphate + ATP = D-tagatofuranose 1,6-bisphosphate + ADP + H(+). It functions in the pathway carbohydrate metabolism; D-tagatose 6-phosphate degradation; D-glyceraldehyde 3-phosphate and glycerone phosphate from D-tagatose 6-phosphate: step 1/2. In Streptococcus pyogenes serotype M12 (strain MGAS2096), this protein is Tagatose-6-phosphate kinase.